The primary structure comprises 378 residues: Odorant receptor Or2 (378 aa).

Position 1 (M1) is a topological domain, cytoplasmic. Residues 2–22 (LIEECPIIGVNVRVWLFWSYL) form a helical membrane-spanning segment. Over 23–29 (RRPRLSR) the chain is Extracellular. The helical transmembrane segment at 30 to 50 (FLVGCIPVAVLNVFQFLKLYS) threads the bilayer. The Cytoplasmic portion of the chain corresponds to 51–59 (SWGDMSELI). The helical transmembrane segment at 60 to 80 (INGYFTVLYFNLVLRTSFLVI) threads the bilayer. At 81–120 (NRRKFETFFEGVAAEYALLEKNDDIRPVLERYTRRGRMLS) the chain is on the extracellular side. Residues 121 to 141 (ISNLWLGAFISACFVTYPLFV) traverse the membrane as a helical segment. Residues 142 to 164 (PGRGLPYGVTIPGVDVLATPTYQ) lie on the Cytoplasmic side of the membrane. Residues 165–185 (VVFVLQVYLTFPACCMYIPFT) traverse the membrane as a helical segment. Topologically, residues 186-254 (SFYATCTLFA…HDLNSLVTHL (69 aa)) are extracellular. Residues 255–275 (CLLEFLSFGMMLCALLFLLSI) traverse the membrane as a helical segment. Residues 276–278 (SNQ) are Cytoplasmic-facing. The chain crosses the membrane as a helical span at residues 279-299 (LAQMIMIGSYIFMILSQMFAF). Topologically, residues 300–378 (YWHANEVLEQ…YFTLLRRVYN (79 aa)) are extracellular. N-linked (GlcNAc...) asparagine glycosylation occurs at N364.

This sequence belongs to the insect chemoreceptor superfamily. Heteromeric odorant receptor channel (TC 1.A.69) family. Or30a subfamily. In terms of tissue distribution, expressed in male and female antennae and maxillary palps.

It localises to the cell membrane. In terms of biological role, odorant receptor which plays a critical role in the anthropophilic host-seeking behavior; establishes the host preference to transmit malaria. The chain is Odorant receptor Or2 (OR2) from Anopheles gambiae (African malaria mosquito).